The following is a 1349-amino-acid chain: Indole-3-acetaldehyde oxidase (1349 aa).

The 2Fe-2S ferredoxin-type domain occupies 7–94; that stretch reads AAVVLAVNGK…RCSVTTSEGI (88 aa). 3 residues coordinate [2Fe-2S] cluster: Cys-46, Cys-51, and Cys-54. The 179-residue stretch at 237-415 folds into the FAD-binding PCMH-type domain; the sequence is VPVSDDGWYR…LSIFIPEWGS (179 aa).

This sequence belongs to the xanthine dehydrogenase family. In terms of assembly, aldehyde oxidases (AO) are homodimers and heterodimers of AO subunits. The cofactor is [2Fe-2S] cluster. Requires FAD as cofactor. Mo-molybdopterin serves as cofactor. Mostly expressed in coleoptiles, and, to a lower extent, in mesocotyl and roots.

It is found in the cytoplasm. It catalyses the reaction indole-3-acetaldehyde + O2 + H2O = (indol-3-yl)acetate + H2O2 + H(+). Functionally, in higher plants aldehyde oxidases (AO) appear to be homo- and heterodimeric assemblies of AO subunits with probably different physiological functions. Involved in the biosynthesis of auxin. The protein is Indole-3-acetaldehyde oxidase (AO2) of Zea mays (Maize).